A 282-amino-acid chain; its full sequence is Protein-export membrane protein SecF (282 aa).

Helical transmembrane passes span 9 to 29 (IAIP…KGIP), 120 to 140 (EGFK…YLYF), 149 to 169 (IILS…LLGI), 174 to 194 (ATIA…ILLT), 214 to 234 (KTGL…LIVV), and 236 to 256 (LFIP…LALI).

This sequence belongs to the SecD/SecF family. SecF subfamily. As to quaternary structure, part of the protein translocation apparatus. Forms a complex with SecD.

The protein localises to the cell membrane. Its function is as follows. Involved in protein export. This chain is Protein-export membrane protein SecF, found in Methanocaldococcus jannaschii (strain ATCC 43067 / DSM 2661 / JAL-1 / JCM 10045 / NBRC 100440) (Methanococcus jannaschii).